A 93-amino-acid polypeptide reads, in one-letter code: Alpha-defensin 23 (93 aa).

Residues M1–A19 form the signal peptide. Residues D20–S58 constitute a propeptide that is removed on maturation. Positions N24–L54 are disordered. Residues E27–Q40 are compositionally biased toward basic and acidic residues. 3 disulfides stabilise this stretch: C64–C92, C66–C81, and C71–C91.

Belongs to the alpha-defensin family.

It localises to the secreted. Functionally, may have microbicidal activities. The polypeptide is Alpha-defensin 23 (Defa23) (Mus musculus (Mouse)).